The sequence spans 368 residues: Flagellar P-ring protein (368 aa).

The first 24 residues, M1–A24, serve as a signal peptide directing secretion.

This sequence belongs to the FlgI family. In terms of assembly, the basal body constitutes a major portion of the flagellar organelle and consists of four rings (L,P,S, and M) mounted on a central rod.

It is found in the periplasm. It localises to the bacterial flagellum basal body. Functionally, assembles around the rod to form the L-ring and probably protects the motor/basal body from shearing forces during rotation. The polypeptide is Flagellar P-ring protein (Geobacter sulfurreducens (strain ATCC 51573 / DSM 12127 / PCA)).